The chain runs to 506 residues: 2-isopropylmalate synthase (506 aa).

The region spanning 4 to 266 is the Pyruvate carboxyltransferase domain; it reads ILFMDTTLRD…EPSMTLKEIK (263 aa). The Mn(2+) site is built by Asp-13, His-201, His-203, and Asn-237. The tract at residues 390–506 is regulatory domain; the sequence is NITQLQVHFV…KLKSFIQLVK (117 aa).

Belongs to the alpha-IPM synthase/homocitrate synthase family. LeuA type 1 subfamily. In terms of assembly, homodimer. Requires Mn(2+) as cofactor.

It localises to the cytoplasm. It carries out the reaction 3-methyl-2-oxobutanoate + acetyl-CoA + H2O = (2S)-2-isopropylmalate + CoA + H(+). It functions in the pathway amino-acid biosynthesis; L-leucine biosynthesis; L-leucine from 3-methyl-2-oxobutanoate: step 1/4. In terms of biological role, catalyzes the condensation of the acetyl group of acetyl-CoA with 3-methyl-2-oxobutanoate (2-ketoisovalerate) to form 3-carboxy-3-hydroxy-4-methylpentanoate (2-isopropylmalate). The chain is 2-isopropylmalate synthase from Bacillus cereus (strain ATCC 10987 / NRS 248).